The following is a 99-amino-acid chain: Thylakoid membrane protein ssl2009 (99 aa).

A helical transmembrane segment spans residues 10 to 30 (GFLLGTVIGGVVGGILGSVLA). The stretch at 50–84 (NLDSEENIELARRRLEDKIAQLNLVIDDVRDQLGH) forms a coiled coil.

It is found in the cellular thylakoid membrane. This Synechocystis sp. (strain ATCC 27184 / PCC 6803 / Kazusa) protein is Thylakoid membrane protein ssl2009.